A 240-amino-acid chain; its full sequence is Thyroid transcription factor 1-associated protein 26 (240 aa).

The disordered stretch occupies residues 104 to 181 (LRKQQRKAGL…QEEYERVQAK (78 aa)). A compositionally biased stretch (low complexity) spans 131 to 149 (TEQTSSEEPPGGHQPQPEE). Over residues 171 to 181 (AQEEYERVQAK) the composition is skewed to basic and acidic residues.

It belongs to the TAP26 family. In terms of assembly, interacts with NKX2-1.

It localises to the nucleus. In terms of biological role, component of the transcription complexes of the pulmonary surfactant-associated protein-B (SFTPB) and -C (SFTPC). Enhances homeobox protein Nkx-2.1-activated SFTPB and SFTPC promoter activities. This chain is Thyroid transcription factor 1-associated protein 26 (Ccdc59), found in Mus musculus (Mouse).